The primary structure comprises 165 residues: Disulfide bond formation protein B (165 aa).

Over 1 to 11 the chain is Cytoplasmic; it reads MICSKVPVRAW. Residues 12-28 traverse the membrane as a helical segment; sequence FATLGLGCLGLVAVGMA. Residues 29–46 lie on the Periplasmic side of the membrane; sequence LQTLLHLAPCPLCIFQRL. Cys-38 and Cys-41 are disulfide-bonded. Residues 47–61 traverse the membrane as a helical segment; it reads LYIMIGFVGLLGFVL. Residues 62 to 66 are Cytoplasmic-facing; sequence PAGRL. The chain crosses the membrane as a helical span at residues 67–84; the sequence is LWSTLAAGLGVLGFGVAA. At 85–142 the chain is on the periplasmic side; it reads YQTWMQAFPDLAPECGFTDPNAIERLVDWLGMEWPSMFLATGFCTSRDWELLGLSMAN. Cys-99 and Cys-128 are oxidised to a cystine. The chain crosses the membrane as a helical span at residues 143–161; sequence WSVLIFAGIVAYAVLLFVR. Over 162–165 the chain is Cytoplasmic; the sequence is KDRA.

The protein belongs to the DsbB family.

The protein localises to the cell inner membrane. Functionally, required for disulfide bond formation in some periplasmic proteins. Acts by oxidizing the DsbA protein. The protein is Disulfide bond formation protein B of Dechloromonas aromatica (strain RCB).